The primary structure comprises 1391 residues: DNA-directed RNA polymerase subunit beta' (1391 aa).

Zn(2+) is bound by residues C72, C74, C87, and C90. Mg(2+)-binding residues include D462, D464, and D466. 4 residues coordinate Zn(2+): C816, C890, C897, and C900.

Belongs to the RNA polymerase beta' chain family. In terms of assembly, the RNAP catalytic core consists of 2 alpha, 1 beta, 1 beta' and 1 omega subunit. When a sigma factor is associated with the core the holoenzyme is formed, which can initiate transcription. Requires Mg(2+) as cofactor. The cofactor is Zn(2+).

It carries out the reaction RNA(n) + a ribonucleoside 5'-triphosphate = RNA(n+1) + diphosphate. Functionally, DNA-dependent RNA polymerase catalyzes the transcription of DNA into RNA using the four ribonucleoside triphosphates as substrates. This is DNA-directed RNA polymerase subunit beta' from Neisseria meningitidis serogroup C (strain 053442).